The following is a 942-amino-acid chain: UvrABC system protein A (942 aa).

32 to 39 lines the ATP pocket; sequence GLSGSGKS. Residues 251–278 form a C4-type zinc finger; sequence CPVCGFTVPELEPRLFSFNAPFGSCPTC. 2 ABC transporter domains span residues 308–589 and 609–937; these read WNPI…KKSI and GNGR…HYLK. 641–648 contributes to the ATP binding site; the sequence is GVSGSGKS. The C4-type zinc-finger motif lies at 740–766; the sequence is CEACSGDGIIKIEMHFLPDVYVPCEVC.

Belongs to the ABC transporter superfamily. UvrA family. In terms of assembly, forms a heterotetramer with UvrB during the search for lesions.

It localises to the cytoplasm. Its function is as follows. The UvrABC repair system catalyzes the recognition and processing of DNA lesions. UvrA is an ATPase and a DNA-binding protein. A damage recognition complex composed of 2 UvrA and 2 UvrB subunits scans DNA for abnormalities. When the presence of a lesion has been verified by UvrB, the UvrA molecules dissociate. The sequence is that of UvrABC system protein A from Streptococcus pyogenes serotype M6 (strain ATCC BAA-946 / MGAS10394).